The chain runs to 536 residues: Light-independent protochlorophyllide reductase subunit B (536 aa).

A [4Fe-4S] cluster-binding site is contributed by Asp36. Asp292 serves as the catalytic Proton donor. 427–428 is a binding site for substrate; that stretch reads GL. Residues 447-489 are disordered; sequence QSHLGHLGGHQSQTEQQQSQAATNPSTQSNTDSSSEESPLWTP. The span at 448–469 shows a compositional bias: low complexity; it reads SHLGHLGGHQSQTEQQQSQAAT. Polar residues predominate over residues 470–483; that stretch reads NPSTQSNTDSSSEE.

This sequence belongs to the ChlB/BchB/BchZ family. Protochlorophyllide reductase is composed of three subunits; ChlL, ChlN and ChlB. Forms a heterotetramer of two ChlB and two ChlN subunits. [4Fe-4S] cluster is required as a cofactor.

It carries out the reaction chlorophyllide a + oxidized 2[4Fe-4S]-[ferredoxin] + 2 ADP + 2 phosphate = protochlorophyllide a + reduced 2[4Fe-4S]-[ferredoxin] + 2 ATP + 2 H2O. It participates in porphyrin-containing compound metabolism; chlorophyll biosynthesis (light-independent). In terms of biological role, component of the dark-operative protochlorophyllide reductase (DPOR) that uses Mg-ATP and reduced ferredoxin to reduce ring D of protochlorophyllide (Pchlide) to form chlorophyllide a (Chlide). This reaction is light-independent. The NB-protein (ChlN-ChlB) is the catalytic component of the complex. The protein is Light-independent protochlorophyllide reductase subunit B of Prochlorococcus marinus (strain MIT 9303).